A 185-amino-acid polypeptide reads, in one-letter code: Pycsar effector protein EcPycTM (185 aa).

A run of 3 helical transmembrane segments spans residues 32 to 52 (ALLL…VGYF), 63 to 83 (MVIF…SVLL), and 141 to 161 (FILS…VSWI).

It localises to the cell inner membrane. Its function is as follows. Pycsar (pyrimidine cyclase system for antiphage resistance) provides immunity against bacteriophage. The pyrimidine cyclase (PycC) synthesizes cyclic nucleotides in response to infection; these serve as specific second messenger signals. The signals activate the adjacent effector, leading to bacterial cell death and abortive phage infection. A clade E Pycsar system. Functionally, the effector component of a two-gene Pycsar system. Expression of this and adjacent cytidylate cyclase EcPycC (AC P0DV24) confers resistance to bacteriophage P1 and T5; this protein is required for resistance. When cells expressing the Pycsar system are infected by phage T5 at low multiplicity of infection (0.2 MOI) the culture survives, at 2.0 MOI bacteria enter growth arrest. The same cells enter growth arrest after exposure to 250 uM cCMP but not cUMP; this effector protein responds only to cCMP, usually produced by its cognate NTP cyclase. Some of the cells treated with cCMP have abnormal membrane protrusions, probably due to effects on membrane integrity. The sequence is that of Pycsar effector protein EcPycTM from Escherichia coli.